The sequence spans 547 residues: CAP-Gly domain-containing linker protein 3 (547 aa).

The interval 1-49 is disordered; sequence MTKTDPAPMAPPPRGEEEEEEEEDEPVPEAPSPTQERRQKPVVHPSAPA. Acidic residues predominate over residues 16–27; sequence EEEEEEEEDEPV. ANK repeat units follow at residues 117-158, 160-191, and 197-229; these read TDMT…LRSR, TNMNALHYAAYFDVPDLVRVLLKGARPRVVNS, and NHGSALHIAASSLCLGAAKCLLEHGANPALRNR. Residues 314 to 356 enclose the CAP-Gly 1 domain; sequence GTTEFASGQWVGVELDEPEGKNDGSVGGVRYFICPPKQGLFAS. A disordered region spans residues 365–413; sequence DAPPSSVTSTPRTPRMDFSRVTGKGRREHKGKKKTPSSPSLGSLQQRDG. Residues 367–377 show a composition bias toward low complexity; that stretch reads PPSSVTSTPRT. Threonine 374 is modified (phosphothreonine). The span at 387-399 shows a compositional bias: basic residues; that stretch reads GKGRREHKGKKKT. The span at 400–410 shows a compositional bias: polar residues; the sequence is PSSPSLGSLQQ. Serine 401 carries the phosphoserine modification. In terms of domain architecture, CAP-Gly 2 spans 436–478; it reads GKTDFAPGYWYGIELDQPTGKHDGSVFGVRYFTCPPRHGVFAP. The interval 488 to 547 is goLD; that stretch reads STDSPGDSVGAKKVHQVTMTQPKRTFTTVRTPKDIASENSISRLLFCCWFPWMLRAEMQS. 2 S-palmitoyl cysteine lipidation sites follow: cysteine 534 and cysteine 535.

As to quaternary structure, homodimer. Interacts with AKT1 and AKT2; when AKT1 and AKT2 are phosphorylated and activated, affinity is higher for AKT2. Interacts with ZDHHC13 (via ANK repeats). Interacts with ZDHHC17 (via ANK repeats). In terms of processing, palmitoylation by ZDHHC17 regulates association with the plasma membrane.

It is found in the cell membrane. The protein localises to the cytoplasm. The protein resides in the golgi apparatus. It localises to the golgi stack. In terms of biological role, functions as a cytoplasmic linker protein. Involved in TGN-endosome dynamics. May modulate the cellular compartmentalization of AKT kinase family and promote its cell membrane localization, thereby playing a role in glucose transport in adipocytes. In Homo sapiens (Human), this protein is CAP-Gly domain-containing linker protein 3 (CLIP3).